We begin with the raw amino-acid sequence, 1030 residues long: Toll-like receptor 9 (1030 aa).

Positions 1–24 (MGPRCTLHPLSLLVQVTALAAALA) are cleaved as a signal peptide. Residues 25–816 (QGRLPAFLPC…LCLDETLSWN (792 aa)) lie on the Extracellular side of the membrane. C34 and C44 are joined by a disulfide. A DNA-binding site is contributed by 46–50 (WLFLK). LRR repeat units lie at residues 61–84 (RANV…DFVH), 86–109 (SSLR…HFPC), 121–146 (VPTL…SLVS), 149–165 (LSRT…LTGL), 166–189 (HALR…ALEV), 197–220 (LGNL…LPPS), 222–241 (ETLL…DLAN), 242–267 (LTAL…CREC), 282–305 (LSRL…WFRG), 307–331 (DRLQ…AFQG), 332–355 (LARL…HLHL), 362–385 (LRSL…TLQP), 389–412 (LPML…IFGA), 414–439 (PGLL…TREV), 469–493 (CKAF…MFAR), 495–518 (SRLE…QFVP), 519–542 (LTSL…SFTE), 544–571 (PRLE…SFVA), 573–597 (LPAL…LCSA), 599–621 (LCAL…LYLR), 626–649 (LRSL…ALDN), 651–674 (PKSL…SLTL), 675–698 (LPKL…SLPS), 700–722 (TQLR…FFAL), 723–746 (AKQL…WFGS), and 748–771 (VGNL…TFVG). A glycan (N-linked (GlcNAc...) asparagine) is linked at N63. Residues 71–76 (SNRIHH) and 94–108 (KWNC…MHFP) contribute to the DNA site. C97 and C109 are joined by a disulfide. N128 is a glycosylation site (N-linked (GlcNAc...) asparagine). DNA is bound by residues Y131, R151, and 178–180 (YYK). Residues C177 and C183 are joined by a disulfide bond. An N-linked (GlcNAc...) asparagine glycan is attached at N199. Residue Y207 participates in DNA binding. Residues N209 and N241 are each glycosylated (N-linked (GlcNAc...) asparagine). Disulfide bonds link C254-C267 and C257-C264. C257 is lipidated: S-palmitoyl cysteine. R261 contributes to the DNA binding site. The S-palmitoyl cysteine moiety is linked to residue C264. N-linked (GlcNAc...) asparagine glycosylation is present at N339. The cysteines at positions 469 and 499 are disulfide-linked. N-linked (GlcNAc...) asparagine glycosylation is present at N512. N-linked (GlcNAc...) asparagine glycosylation is present at N566. 2 N-linked (GlcNAc...) asparagine glycosylation sites follow: N668 and N693. A glycan (N-linked (GlcNAc...) asparagine) is linked at N730. Disulfide bonds link C763/C789 and C765/C808. The chain crosses the membrane as a helical span at residues 817–837 (CFGISLLAMALGLVVPMLHHL). At 838–1030 (CGWDLWYCFH…NFCRGPTTAE (193 aa)) the chain is on the cytoplasmic side. The region spanning 865 to 1010 (LFYDAFVVFD…SFWAQLGTAL (146 aa)) is the TIR domain.

It belongs to the Toll-like receptor family. In terms of assembly, monomer and homodimer. Exists as a monomer in the absence of unmethylated cytidine-phosphate-guanosine (CpG) ligand. Proteolytic processing of an insertion loop (Z-loop) is required for homodimerization upon binding to the unmethylated CpG ligand leading to its activation. Interacts with MYD88 via their respective TIR domains. Interacts with BTK. Interacts (via transmembrane domain) with UNC93B1. Interacts with CD300LH; the interaction may promote full activation of TLR9-triggered innate responses. Interacts with CNPY3 and HSP90B1; this interaction is required for proper folding in the endoplasmic reticulum. Interacts with SMPDL3B. Interacts with CD82; this interaction is essential for TLR9-dependent myddosome formation in response to CpG stimulation. Activated by proteolytic cleavage of the flexible loop between repeats LRR14 and LRR15 within the ectodomain. Cleavage requires UNC93B1. Proteolytically processed by first removing the majority of the ectodomain by either asparagine endopeptidase (AEP) or a cathepsin followed by a trimming event that is solely cathepsin mediated and required for optimal receptor signaling. In terms of processing, palmitoylated by ZDHHC3 in the Golgi regulates TLR9 trafficking from the Golgi to endosomes. Depalmitoylation by PPT1 controls the release of TLR9 from UNC93B1 in endosomes.

The protein resides in the endoplasmic reticulum membrane. Its subcellular location is the endosome. The protein localises to the lysosome. It localises to the cytoplasmic vesicle. It is found in the phagosome. Its function is as follows. Key component of innate and adaptive immunity. TLRs (Toll-like receptors) control host immune response against pathogens through recognition of molecular patterns specific to microorganisms. TLR9 is a nucleotide-sensing TLR which is activated by unmethylated cytidine-phosphate-guanosine (CpG) dinucleotides. Acts via MYD88 and TRAF6, leading to NF-kappa-B activation, cytokine secretion and the inflammatory response. Upon CpG stimulation, induces B-cell proliferation, activation, survival and antibody production. This is Toll-like receptor 9 (TLR9) from Sus scrofa (Pig).